Consider the following 451-residue polypeptide: Golgi reassembly-stacking protein 2 (451 aa).

Glycine 2 carries N-myristoyl glycine lipidation. PDZ GRASP-type domains are found at residues 15–105 (EGYH…FCSF) and 111–199 (NVWH…YGYL). The interval 15-215 (EGYHVLRVQE…PFEEGKKISL (201 aa)) is GRASP. Residues arginine 30 and arginine 47 each carry the dimethylated arginine modification. The segment at 194–199 (IGYGYL) is important for membrane binding. The residue at position 214 (serine 214) is a Phosphoserine. At threonine 222 the chain carries Phosphothreonine. At threonine 225 the chain carries Phosphothreonine; by MAPK. Positions 236–252 (LSSVSPPSLSPPGTTGV) are enriched in low complexity. 2 disordered regions span residues 236–255 (LSSV…VEQS) and 377–451 (EGSS…SEPS). Residues 410-424 (SSLTVDVTSPASKVP) are compositionally biased toward polar residues. Phosphoserine is present on serine 411. Phosphothreonine occurs at positions 417 and 435. Phosphoserine occurs at positions 443 and 448.

Belongs to the GORASP family. As to quaternary structure, homodimer. Homooligomer. ER stress induces phosphorylation-dependent monomerization. Interacts with BLZF1/Golgin 45. Identified in a complex with RAB2 and GORASP2. Interacts with JAM2 and JAM3. Interacts with members of the p24 cargo receptors. Interacts with CNIH and the cytoplasmic domain of transmembrane TGFA, prior its transit in the trans-Golgi. Interacts with KCTD5. Interacts with TMED2 and TMED3. Interacts with SEC16A in response to ER stress. Interacts (via PDZ GRASP-type 1 domain) with core-glycosylated CFTR in response to ER stress. Myristoylated. Myristoylation is essential for the Golgi targeting. Post-translationally, palmitoylated. In terms of processing, phosphorylated in mitotic cells. ER stress-induced phosphorylation at Ser-443 induces monomerization and subsequent relocalization from Golgi to ER which is essential for mediating unconventional (ER/Golgi-independent) trafficking of CFTR to the cell membrane. As to expression, detected in lung, heart and testis. Colocalized in a polarized fashion in the acrosome region with JAM3 in round spermatids (at protein level).

The protein localises to the golgi apparatus membrane. The protein resides in the endoplasmic reticulum membrane. It is found in the golgi apparatus. In terms of biological role, key structural protein of the Golgi apparatus. The membrane cisternae of the Golgi apparatus adhere to each other to form stacks, which are aligned side by side to form the Golgi ribbon. Acting in concert with GORASP1/GRASP65, is required for the formation and maintenance of the Golgi ribbon, and may be dispensable for the formation of stacks. However, other studies suggest that GORASP2 plays a role in assembly and membrane stacking of the Golgi cisternae, and in the process by which Golgi stacks reform after breakdown during mitosis and meiosis. May regulate the intracellular transport and presentation of a defined set of transmembrane proteins, such as transmembrane TGFA. Required for normal acrosome formation during spermiogenesis and normal male fertility, probably by promoting colocalization of JAM2 and JAM3 at contact sites between germ cells and Sertoli cells. Mediates ER stress-induced unconventional (ER/Golgi-independent) trafficking of core-glycosylated CFTR to cell membrane. The polypeptide is Golgi reassembly-stacking protein 2 (Gorasp2) (Mus musculus (Mouse)).